The primary structure comprises 375 residues: Growth/differentiation factor 8 (375 aa).

The N-terminal stretch at 1-18 is a signal peptide; that stretch reads MQKLQIFVYIYLFMLLVA. The propeptide occupies 19–266; the sequence is GPVDLNENSE…VTDTPKRSRR (248 aa). N-linked (GlcNAc...) asparagine glycans are attached at residues asparagine 48 and asparagine 71. Disulfide bonds link cysteine 272-cysteine 282, cysteine 281-cysteine 340, cysteine 309-cysteine 372, and cysteine 313-cysteine 374.

This sequence belongs to the TGF-beta family. In terms of assembly, homodimer; disulfide-linked. Interacts with WFIKKN2, leading to inhibit its activity. Interacts with FSTL3. Synthesized as large precursor molecule that undergoes proteolytic cleavage to generate an N-terminal propeptide and a disulfide linked C-terminal dimer, which is the biologically active molecule. The circulating form consists of a latent complex of the C-terminal dimer and other proteins, including its propeptide, which maintain the C-terminal dimer in a latent, inactive state. Ligand activation requires additional cleavage of the prodomain by a tolloid-like metalloproteinase.

Its subcellular location is the secreted. Functionally, acts specifically as a negative regulator of skeletal muscle growth. This is Growth/differentiation factor 8 (MSTN) from Capra ibex (Ibex).